The following is a 605-amino-acid chain: DNA primase (605 aa).

The segment at 38-62 adopts a CHC2-type zinc-finger fold; it reads CPFHDEKTPSFTVSEDKQICHCFGC. A Toprim domain is found at 260 to 341; that stretch reads DEIVLLEGFM…NVFVIQLPSG (82 aa). Mg(2+) contacts are provided by glutamate 266, aspartate 310, and aspartate 312.

The protein belongs to the DnaG primase family. As to quaternary structure, monomer. Interacts with DnaB. The cofactor is Zn(2+). It depends on Mg(2+) as a cofactor.

The catalysed reaction is ssDNA + n NTP = ssDNA/pppN(pN)n-1 hybrid + (n-1) diphosphate.. RNA polymerase that catalyzes the synthesis of short RNA molecules used as primers for DNA polymerase during DNA replication. This is DNA primase from Staphylococcus aureus.